Here is a 406-residue protein sequence, read N- to C-terminus: Corticosteroid-binding globulin (406 aa).

An N-terminal signal peptide occupies residues M1–A22. N-linked (GlcNAc...) asparagine glycans are attached at residues N31 and N96. Cortisol is bound at residue Q255. The N-linked (GlcNAc...) asparagine glycan is linked to N261. D287 is a binding site for cortisol. N-linked (GlcNAc...) asparagine glycans are attached at residues N331 and N360. Residue W394 participates in cortisol binding.

This sequence belongs to the serpin family. In terms of tissue distribution, expressed by the liver; secreted in plasma.

The protein resides in the secreted. Its function is as follows. Major transport protein for glucocorticoids and progestins in the blood of almost all vertebrate species. The chain is Corticosteroid-binding globulin (SERPINA6) from Saimiri sciureus (Common squirrel monkey).